A 623-amino-acid polypeptide reads, in one-letter code: Glutamine--fructose-6-phosphate aminotransferase [isomerizing] (623 aa).

The Nucleophile; for GATase activity role is filled by C2. Positions 2–228 (CGIVGYIGQA…NDQVVTITAD (227 aa)) constitute a Glutamine amidotransferase type-2 domain. 2 SIS domains span residues 295 to 435 (IDES…LRGN) and 468 to 613 (LGRS…VDQP). K618 functions as the For Fru-6P isomerization activity in the catalytic mechanism.

In terms of assembly, homodimer.

The protein resides in the cytoplasm. It catalyses the reaction D-fructose 6-phosphate + L-glutamine = D-glucosamine 6-phosphate + L-glutamate. Its function is as follows. Catalyzes the first step in hexosamine metabolism, converting fructose-6P into glucosamine-6P using glutamine as a nitrogen source. This chain is Glutamine--fructose-6-phosphate aminotransferase [isomerizing], found in Corynebacterium efficiens (strain DSM 44549 / YS-314 / AJ 12310 / JCM 11189 / NBRC 100395).